Here is a 1232-residue protein sequence, read N- to C-terminus: Histone-lysine N-methyltransferase MECOM (1232 aa).

Positions Pro22–Ala68 are disordered. Acidic residues predominate over residues Pro25–Ala34. The region spanning Asp80–Lys192 is the SET domain. Glycyl lysine isopeptide (Lys-Gly) (interchain with G-Cter in SUMO2) cross-links involve residues Lys101 and Lys192. Positions Met191–Gly442 are interaction with SUV39H1 and probably MAPK9 and SMAD3. 5 consecutive C2H2-type zinc fingers follow at residues His211 to His238, Gln265 to His287, Tyr293 to His315, Tyr321 to His344, and His350 to His372. A Glycyl lysine isopeptide (Lys-Gly) (interchain with G-Cter in SUMO2) cross-link involves residue Lys294. Glycyl lysine isopeptide (Lys-Gly) (interchain with G-Cter in SUMO2) cross-links involve residues Lys369 and Lys376. Residues Phe378 to His400 form a C2H2-type 6 zinc finger. The segment at Ile407–Cys429 adopts a C2H2-type 7; atypical zinc-finger fold. Residues Lys432, Lys525, Lys545, Lys549, and Lys557 each participate in a glycyl lysine isopeptide (Lys-Gly) (interchain with G-Cter in SUMO2) cross-link. Residues Ser548–Lys622 form a disordered region. The span at Leu562–Asp577 shows a compositional bias: basic and acidic residues. A compositionally biased stretch (polar residues) spans Ser588–Gly600. Residues Glu608–Lys622 are compositionally biased toward basic and acidic residues. The Nuclear localization signal signature appears at Lys611–Lys624. Lys624 is covalently cross-linked (Glycyl lysine isopeptide (Lys-Gly) (interchain with G-Cter in SUMO2)). Ser626 carries the phosphoserine modification. Residues Lys637, Lys665, Lys687, and Lys723 each participate in a glycyl lysine isopeptide (Lys-Gly) (interchain with G-Cter in SUMO2) cross-link. A disordered region spans residues Leu720–Thr823. Ser728 carries the post-translational modification Phosphoserine. Glycyl lysine isopeptide (Lys-Gly) (interchain with G-Cter in SUMO2) cross-links involve residues Lys733, Lys734, and Lys737. Phosphoserine is present on Ser742. Positions Pro743–Thr747 match the CTBP-binding motif 1 motif. Glycyl lysine isopeptide (Lys-Gly) (interchain with G-Cter in SUMO2) cross-links involve residues Lys751, Lys754, and Lys762. The segment covering Ser758–Gln773 has biased composition (polar residues). Residues Pro774–Ser778 carry the CTBP-binding motif 2 motif. Glycyl lysine isopeptide (Lys-Gly) (interchain with G-Cter in SUMO2) cross-links involve residues Lys789, Lys802, and Lys803. The span at Thr791 to Ser805 shows a compositional bias: basic and acidic residues. Polar residues predominate over residues Asn806–Ser816. Glycyl lysine isopeptide (Lys-Gly) (interchain with G-Cter in SUMO2) cross-links involve residues Lys837, Lys846, Lys848, and Lys879. 3 consecutive C2H2-type zinc fingers follow at residues Tyr914–His936, Tyr942–His965, and Phe971–His993. A Glycyl lysine isopeptide (Lys-Gly) (interchain with G-Cter in SUMO2) cross-link involves residue Lys1020. Residues Ile1032–Arg1043 show a composition bias toward polar residues. The segment at Ile1032–Pro1107 is disordered. 2 positions are modified to phosphoserine: Ser1039 and Ser1041. A compositionally biased stretch (basic and acidic residues) spans Asn1044–Ala1059. Glycyl lysine isopeptide (Lys-Gly) (interchain with G-Cter in SUMO2) cross-links involve residues Lys1055 and Lys1058. A compositionally biased stretch (acidic residues) spans Leu1068–Asp1088. Over residues Ile1089–Glu1104 the composition is skewed to basic and acidic residues. Glycyl lysine isopeptide (Lys-Gly) (interchain with G-Cter in SUMO2) cross-links involve residues Lys1122, Lys1129, Lys1134, Lys1151, Lys1178, and Lys1186.

As to quaternary structure, homooligomer. Interacts with CTBP1. Interacts with SMAD3 (via MH2 domain); the interaction is direct. Interacts with SMAD4; through interaction with SMAD3. Interacts with CREBBP, KAT2B and histone deacetylases. Interacts with MAPK8 and MAPK9; inhibits JNK signaling. Interacts with SUV39H1 (via SET domain); enhances MECOM transcriptional repression activity. May be acetylated by CREBBP and KAT2B.

It is found in the nucleus. It localises to the nucleus speckle. The protein localises to the cytoplasm. The enzyme catalyses L-lysyl(9)-[histone H3] + S-adenosyl-L-methionine = N(6)-methyl-L-lysyl(9)-[histone H3] + S-adenosyl-L-homocysteine + H(+). In terms of biological role, functions as a transcriptional regulator binding to DNA sequences in the promoter region of target genes and regulating positively or negatively their expression. Oncogene which plays a role in development, cell proliferation and differentiation. May also play a role in apoptosis through regulation of the JNK and TGF-beta signaling. Involved in hematopoiesis. Functionally, displays histone methyltransferase activity and monomethylates 'Lys-9' of histone H3 (H3K9me1) in vitro. Probably catalyzes the monomethylation of free histone H3 in the cytoplasm which is then transported to the nucleus and incorporated into nucleosomes where SUV39H methyltransferases use it as a substrate to catalyze histone H3 'Lys-9' trimethylation. Likely to be one of the primary histone methyltransferases along with PRDM16 that direct cytoplasmic H3K9me1 methylation. This Mus musculus (Mouse) protein is Histone-lysine N-methyltransferase MECOM.